Reading from the N-terminus, the 84-residue chain is MCLKILVRYNTRGNTYSTAWLCALGKVLPFHRWHTMVQTCTPNVTINCQDPAGGALIARCWYLHEGHQTAAFRDVLVVLNKRTN.

The region spanning 1 to 82 is the SARS ORF8 Ig-like domain; it reads MCLKILVRYN…RDVLVVLNKR (82 aa). A disulfide bridge links cysteine 22 with cysteine 40.

It localises to the host cytoplasm. The protein localises to the host nucleus. Non-structural protein which is dispensable for virus replication in cell culture. The chain is ORF8b protein from Severe acute respiratory syndrome coronavirus (SARS-CoV).